We begin with the raw amino-acid sequence, 200 residues long: Holliday junction branch migration complex subunit RuvA (200 aa).

Residues Met1–Ala63 form a domain I region. Residues Asp64–Gly142 are domain II. The tract at residues Gly142–Pro146 is flexible linker. The interval Ala147–Ala200 is domain III.

This sequence belongs to the RuvA family. In terms of assembly, homotetramer. Forms an RuvA(8)-RuvB(12)-Holliday junction (HJ) complex. HJ DNA is sandwiched between 2 RuvA tetramers; dsDNA enters through RuvA and exits via RuvB. An RuvB hexamer assembles on each DNA strand where it exits the tetramer. Each RuvB hexamer is contacted by two RuvA subunits (via domain III) on 2 adjacent RuvB subunits; this complex drives branch migration. In the full resolvosome a probable DNA-RuvA(4)-RuvB(12)-RuvC(2) complex forms which resolves the HJ.

The protein resides in the cytoplasm. The RuvA-RuvB-RuvC complex processes Holliday junction (HJ) DNA during genetic recombination and DNA repair, while the RuvA-RuvB complex plays an important role in the rescue of blocked DNA replication forks via replication fork reversal (RFR). RuvA specifically binds to HJ cruciform DNA, conferring on it an open structure. The RuvB hexamer acts as an ATP-dependent pump, pulling dsDNA into and through the RuvAB complex. HJ branch migration allows RuvC to scan DNA until it finds its consensus sequence, where it cleaves and resolves the cruciform DNA. The chain is Holliday junction branch migration complex subunit RuvA from Nocardioides sp. (strain ATCC BAA-499 / JS614).